Consider the following 956-residue polypeptide: MAM domain-containing glycosylphosphatidylinositol anchor protein 1 (956 aa).

An N-terminal signal peptide occupies residues 1-18 (MEVTCLLLLALIPFHCRG). Ig-like domains are found at residues 24–123 (PAQA…KSIR) and 132–230 (PVLT…KAIT). N-linked (GlcNAc...) asparagine glycosylation occurs at Asn-42. 2 cysteine pairs are disulfide-bonded: Cys-60/Cys-108 and Cys-157/Cys-214. Asn-235, Asn-247, Asn-257, and Asn-307 each carry an N-linked (GlcNAc...) asparagine glycan. Ig-like domains follow at residues 240–323 (PALK…KTVN), 338–432 (PDMI…IEVN), 440–532 (PTIS…AQVQ), and 539–650 (PEVE…PTRS). 2 cysteine pairs are disulfide-bonded: Cys-262/Cys-308 and Cys-357/Cys-415. N-linked (GlcNAc...) asparagine glycosylation is present at Asn-432. 2 cysteine pairs are disulfide-bonded: Cys-463–Cys-514 and Cys-560–Cys-616. A Fibronectin type-III domain is found at 627–744 (CLFQVSAKAY…SRIIHYTEPI (118 aa)). The MAM domain maps to 752–919 (NTCHFEDEKI…VTLKKGECPR (168 aa)). Residues 780–789 (LTQNPKRSPN) are compositionally biased toward polar residues. Residues 780 to 799 (LTQNPKRSPNTGPPTDISGT) form a disordered region. Ser-933 is lipidated: GPI-anchor amidated serine. A propeptide spans 934–956 (GAPRLSSLQLWGSMAIFLLALQR) (removed in mature form).

Interacts heterophilically through its MAM domain with proteins in axon-rich regions and through its Ig-like domains with proteins in differentiating muscle. Interacts (through the Ig-like domains) with NLGN2. In terms of tissue distribution, expressed by neurons in layers 2 and 3 of the cortex during their migration and settling in the cortical plate. Also found in layers 4 and 6a. From 9.5 dpc-13.5 dpc, detected in the marginal zone of the developing cortex. At 16.5 dpc, modest expression is found in the intermediate zone. At postnatal day 1, evident in the superficial cortical plate. By postnatal day 7, expression is limited to layers 2 and 3 throughout most of the cortex.

It localises to the cell membrane. Functionally, required for radial migration of cortical neurons in the superficial layer of the neocortex. Plays a role in the formation or maintenance of inhibitory synapses. May function by inhibiting the activity of NLGN2. This is MAM domain-containing glycosylphosphatidylinositol anchor protein 1 from Mus musculus (Mouse).